We begin with the raw amino-acid sequence, 164 residues long: 2S seed storage protein 1 (164 aa).

Positions 1-21 (MANKLFLVCAALALCFLLTNA) are cleaved as a signal peptide. 3 consecutive propeptides follow at residues 22-37 (SIYR…DATN), 74-83 (EFDFEDDMEN), and 163-164 (FY).

Belongs to the 2S seed storage albumins family. The mature protein consists of a small and a large chain linked by disulfide bonds.

In terms of biological role, this is a 2S seed storage protein. This is 2S seed storage protein 1 (AT2S1) from Arabidopsis thaliana (Mouse-ear cress).